Reading from the N-terminus, the 125-residue chain is uncharacterized protein (125 aa).

The segment covering 1–33 has biased composition (polar residues); sequence MLPHQNSSYTRQGTNDAQANDMRSPSQLPTSVN. 2 disordered regions span residues 1-35 and 44-63; these read MLPH…VNIE and SEKL…KKHT. The span at 53–63 shows a compositional bias: basic residues; the sequence is NRSRSGIKKHT.

This is an uncharacterized protein from Schizosaccharomyces pombe (strain 972 / ATCC 24843) (Fission yeast).